We begin with the raw amino-acid sequence, 54 residues long: ATP synthase F(0) complex subunit 8 (54 aa).

The chain crosses the membrane as a helical span at residues 13-35 (ALSLWVCFPLMMLSLSSFLPLTL).

This sequence belongs to the ATPase protein 8 family. As to quaternary structure, component of the ATP synthase complex composed at least of ATP5F1A/subunit alpha, ATP5F1B/subunit beta, ATP5MC1/subunit c (homooctomer), MT-ATP6/subunit a, MT-ATP8/subunit 8, ATP5ME/subunit e, ATP5MF/subunit f, ATP5MG/subunit g, ATP5MK/subunit k, ATP5MJ/subunit j, ATP5F1C/subunit gamma, ATP5F1D/subunit delta, ATP5F1E/subunit epsilon, ATP5PF/subunit F6, ATP5PB/subunit b, ATP5PD/subunit d, ATP5PO/subunit OSCP. ATP synthase complex consists of a soluble F(1) head domain (subunits alpha(3) and beta(3)) - the catalytic core - and a membrane F(0) domain - the membrane proton channel (subunits c, a, 8, e, f, g, k and j). These two domains are linked by a central stalk (subunits gamma, delta, and epsilon) rotating inside the F1 region and a stationary peripheral stalk (subunits F6, b, d, and OSCP).

It is found in the mitochondrion membrane. Its function is as follows. Subunit 8, of the mitochondrial membrane ATP synthase complex (F(1)F(0) ATP synthase or Complex V) that produces ATP from ADP in the presence of a proton gradient across the membrane which is generated by electron transport complexes of the respiratory chain. ATP synthase complex consist of a soluble F(1) head domain - the catalytic core - and a membrane F(1) domain - the membrane proton channel. These two domains are linked by a central stalk rotating inside the F(1) region and a stationary peripheral stalk. During catalysis, ATP synthesis in the catalytic domain of F(1) is coupled via a rotary mechanism of the central stalk subunits to proton translocation. In vivo, can only synthesize ATP although its ATP hydrolase activity can be activated artificially in vitro. Part of the complex F(0) domain. The polypeptide is ATP synthase F(0) complex subunit 8 (Myxine glutinosa (Atlantic hagfish)).